A 113-amino-acid chain; its full sequence is Ig kappa chain V-II region 17S29.1 (113 aa).

The segment at 1–23 (DIVMTQAVFSNPVTLGTSASISC) is framework-1. Cysteine 23 and cysteine 93 are disulfide-bonded. The interval 24-39 (RSSKSLLHSNGITYLY) is complementarity-determining-1. Residues 40-54 (WYLQKPGQSPQLLLY) form a framework-2 region. Residues 55–61 (QMSNLAS) are complementarity-determining-2. The segment at 62 to 93 (GVPDRFSSSGSGTDFTLRISRVEAEDVGVYYC) is framework-3. Positions 94–102 (AHNLELPYT) are complementarity-determining-3. Residues 103 to 112 (FGGGTKLEIK) form a framework-4 region.

Its function is as follows. Anti-streptococcal group A carbohydrate antibody. This is Ig kappa chain V-II region 17S29.1 from Mus musculus (Mouse).